The primary structure comprises 323 residues: Beta-ketoacyl-[acyl-carrier-protein] synthase III (323 aa).

Active-site residues include Cys-112 and His-250. The tract at residues 251–255 is ACP-binding; that stretch reads QANYR. The active site involves Asn-280.

The protein belongs to the thiolase-like superfamily. FabH family. In terms of assembly, homodimer.

It is found in the cytoplasm. It carries out the reaction malonyl-[ACP] + acetyl-CoA + H(+) = 3-oxobutanoyl-[ACP] + CO2 + CoA. The protein operates within lipid metabolism; fatty acid biosynthesis. Catalyzes the condensation reaction of fatty acid synthesis by the addition to an acyl acceptor of two carbons from malonyl-ACP. Catalyzes the first condensation reaction which initiates fatty acid synthesis and may therefore play a role in governing the total rate of fatty acid production. Possesses both acetoacetyl-ACP synthase and acetyl transacylase activities. Its substrate specificity determines the biosynthesis of branched-chain and/or straight-chain of fatty acids. In Clostridium beijerinckii (strain ATCC 51743 / NCIMB 8052) (Clostridium acetobutylicum), this protein is Beta-ketoacyl-[acyl-carrier-protein] synthase III.